We begin with the raw amino-acid sequence, 62 residues long: Translational regulator CsrA (62 aa).

It belongs to the CsrA/RsmA family. Homodimer; the beta-strands of each monomer intercalate to form a hydrophobic core, while the alpha-helices form wings that extend away from the core.

Its subcellular location is the cytoplasm. A key translational regulator that binds mRNA to regulate translation initiation and/or mRNA stability. Mediates global changes in gene expression, shifting from rapid growth to stress survival by linking envelope stress, the stringent response and the catabolite repression systems. Usually binds in the 5'-UTR; binding at or near the Shine-Dalgarno sequence prevents ribosome-binding, repressing translation, binding elsewhere in the 5'-UTR can activate translation and/or stabilize the mRNA. Its function is antagonized by small RNA(s). In Idiomarina loihiensis (strain ATCC BAA-735 / DSM 15497 / L2-TR), this protein is Translational regulator CsrA.